The primary structure comprises 411 residues: Immunity-related GTPase family M protein (411 aa).

Residues 1–21 are disordered; that stretch reads MKPSHKSCEAAPLLPKMPETS. Positions 77–253 constitute an IRG-type G domain; the sequence is IPVSIFVTGD…PELRNTLQTD (177 aa). GTP contacts are provided by residues 86-93, 111-115, and 193-195; these read DSGNGMSS, TGVVR, and KLD. Serine 204 carries the post-translational modification Phosphoserine. 234–236 serves as a coordination point for GTP; that stretch reads SNL. Lysine 272 participates in a covalent cross-link: Glycyl lysine isopeptide (Lys-Gly) (interchain with G-Cter in ubiquitin). The alpha-K amphipathic helix stretch occupies residues 352-376; that stretch reads KLRLMTCTTVNALFCLFKFLPCLCH.

Belongs to the TRAFAC class dynamin-like GTPase superfamily. IRG family. In terms of assembly, interacts with ULK1; promoting the coassembly of ULK1 and BECN1. Interacts with BECN1; enhancing BECN1-interacting partners and influencing the composition of the BECN1 complex. Interacts with ATG16L1. Interacts with NOD2; promoting Irgm 'Lys-63'-linked polyubiquitination, which is required for interactions with the core autophagy factors. Interacts with STX17; promoting STX17 recruitment to autophagosomes. Interacts with ATG8 proteins (GABARAP, GABARAPL1, GABARAPL2, MAP1LC3A, MAP1LC3B and MAP1LC3C); promoting STX17 recruitment to autophagosomes. Interacts with TFEB; promoting association between TFEB and PPP3CB and TFEB dephosphorylation. Interacts with PPP3CB; promoting association between TFEB and PPP3CB and TFEB dephosphorylation. Interacts with NLRP3; preventing NLRP3 inflammasome assembly and promoting SQSTM1/p62-dependent autophagic degradation of NLRP3. Interacts with CGAS; promoting SQSTM1/p62-dependent autophagic degradation of CGAS. Interacts with RIGI/RIG-I; promoting SQSTM1/p62-dependent autophagic degradation of RIGI/RIG-I. Interacts with NOD1; promoting SQSTM1/p62-dependent autophagic degradation of RIGI/RIG-I. Interacts with NOD2; promoting SQSTM1/p62-dependent autophagic degradation of RIGI/RIG-I. Interacts with RIPK2; promoting SQSTM1/p62-dependent autophagic degradation of RIGI/RIG-I. Interacts with PIK3CA. Palmitoylated on C-terminal Cys residues. Palmitoylation, together with the alpha-K amphipathic helix, which binds phosphatidylinositol, mediate binding to membranes. Post-translationally, ubiquitinated via 'Lys-63'-linked polyubiquitination in a NOD2-dependent process. 'Lys-63'-linked polyubiquitination is required for interactions with the core autophagy factors. Ubiquitination at Lys-272 by the DCX(WDR77) complex, also named CLR4(WDR77) complex, in intestinal cells, leading to its degradation by the proteasome.

It localises to the golgi apparatus membrane. The protein resides in the cell membrane. Its subcellular location is the cytoplasmic vesicle. The protein localises to the phagosome membrane. It is found in the autophagosome membrane. It localises to the lysosome membrane. The protein resides in the late endosome membrane. Its subcellular location is the mitochondrion membrane. The protein localises to the cell projection. It is found in the phagocytic cup. The catalysed reaction is GTP + H2O = GDP + phosphate + H(+). Immunity-related GTPase that plays important roles in innate immunity and inflammatory response. Acts as a dynamin-like protein that binds to intracellular membranes and promotes remodeling and trafficking of those membranes. Required for clearance of acute protozoan and bacterial infections by interacting with autophagy and lysosome regulatory proteins, thereby promoting the fusion of phagosomes with lysosomes for efficient degradation of cargo including microbes. Regulates selective autophagy, including xenophagy and mitophagy, both directly and indirectly. Directly regulates autophagy by acting as a molecular adapter that promotes the coassembly of the core autophagy machinery to mediate antimicrobial defense: Irgm (1) activates AMPK, which in turn phosphorylates ULK1 and BECN1 to induce autophagy, (2) promotes the coassembly of ULK1 and BECN1, enhancing BECN1-interacting partners and (3) influences the composition of the BECN1 complex, by competing with the negative regulators BCL2 and RUBCN, to trigger autophagy. Also activates autophagy by promoting recruitment of STX17 to autophagosomes. In collaboration with ATG8 proteins, regulate lysosomal biogenesis, a fundamental process for any autophagic pathway, by promoting TFEB dephosphorylation. Also modulates autophagy by assisting with autophagosome formation and preventing lysosomal deacidification. Regulates autophagy by affecting mitochondrial fusion and fission. Also involved in M1 macrophage activation for the production of proinflammatory cytokines. While activating autophagy, acts as a key negative regulator of the inflammatory and interferon responses both by (1) promoting mitophagy and (2) mediating autophagy-dependent degradation of effectors of the inflammatory response. Promotes degradation of damaged and IFNG/IFN-gamma-stressed mitochondria via mitophagy, preventing cytosolic release of ligands that activate inflammation. Negatively regulates interferon-signaling in hematopoietic stem cells, preserving hematopoietic stem cell number and function. Promotes expansion of activated CD4(+) T-cells by inhibiting IFNG/IFN-gamma signaling, thereby preventing Ifng-mediated cell death of CD4(+) T-cells. Acts as a suppressor of inflammation by promoting recruitment of inflammation effectors, such as CGAS, RIGI/RIG-I and NLRP3, to autophagosome membranes, leading to their SQSTM1/p62-dependent autophagic degradation. Also directly inhibits assembly of the NLRP3 inflammasome by preventing the association between NLRP3 and PYCARD. Acts as a negative regulator of antiviral innate immune response by suppressing the RIPK2-dependent pro-inflammatory response: mediates recruitment of RIPosomes, composed of RIPK2 and NOD1 or NOD2, to autophagosome membranes, promoting their SQSTM1/p62-dependent autophagic degradation. In Rattus norvegicus (Rat), this protein is Immunity-related GTPase family M protein.